The sequence spans 78 residues: Chassatide C4 (78 aa).

The first 23 residues, 1-23, serve as a signal peptide directing secretion; it reads MAKFATQLFLLTASVVMLEVQSS. The propeptide at 24–42 is removed in mature form; it reads IVIMQDPDLGRKLIMNPAN. Residues 43 to 71 constitute a cross-link (cyclopeptide (Gly-Asn)); the sequence is GASCGETCFTGICFTAGCSCNPWPTCTRN. 3 cysteine pairs are disulfide-bonded: C46–C60, C50–C62, and C55–C68. A propeptide spans 72-78 (removed in mature form); that stretch reads GLNPESI.

This is a cyclic peptide.

Its function is as follows. Probably participates in a plant defense mechanism. This chain is Chassatide C4, found in Chassalia chartacea (Chassalia curviflora).